We begin with the raw amino-acid sequence, 246 residues long: 3-deoxy-manno-octulosonate cytidylyltransferase (246 aa).

This sequence belongs to the KdsB family.

Its subcellular location is the cytoplasm. The enzyme catalyses 3-deoxy-alpha-D-manno-oct-2-ulosonate + CTP = CMP-3-deoxy-beta-D-manno-octulosonate + diphosphate. The protein operates within nucleotide-sugar biosynthesis; CMP-3-deoxy-D-manno-octulosonate biosynthesis; CMP-3-deoxy-D-manno-octulosonate from 3-deoxy-D-manno-octulosonate and CTP: step 1/1. It functions in the pathway bacterial outer membrane biogenesis; lipopolysaccharide biosynthesis. In terms of biological role, activates KDO (a required 8-carbon sugar) for incorporation into bacterial lipopolysaccharide in Gram-negative bacteria. This chain is 3-deoxy-manno-octulosonate cytidylyltransferase, found in Rickettsia akari (strain Hartford).